The following is a 73-amino-acid chain: MAFLKKSLFLVLFLGLVSLSICDEEKRQDEDDDDDDDEEKRGVFDIIKGAGKQLIAHAMEKIAEKVGLNKDGN.

An N-terminal signal peptide occupies residues 1–22 (MAFLKKSLFLVLFLGLVSLSIC). A propeptide spanning residues 23–39 (DEEKRQDEDDDDDDDEE) is cleaved from the precursor.

As to expression, expressed by the skin glands.

The protein localises to the secreted. Has antibacterial activity against Gram-negative bacterium E.coli ATCC 25922 (MIC=120 uM) but not against S.pneumoniae ATCC 700603, S.choleraesuis ATCC 14028 or against Gram-positive bacterium S.aureus ATCC 29313. Shows no hemolytic activity and no cytotoxicity. The protein is Ocellatin-PT6 of Leptodactylus pustulatus (Ceara white-lipped frog).